We begin with the raw amino-acid sequence, 1211 residues long: Transient receptor potential cation channel subfamily A member 1 homolog (1211 aa).

Topologically, residues 1-811 (MSKKSLGLDV…LKYKWNRLGR (811 aa)) are cytoplasmic. ANK repeat units lie at residues 49–79 (NLRS…AVNA), 83–112 (DFMT…LPNT), 116–169 (EGDT…EIDP), 173–202 (YQLT…DVDA), 206–235 (NKMT…NVTK), 239–270 (RLNT…AIKA), 277–306 (EKKT…KNSC), 311–340 (REKE…NKNE), 344–374 (VKAV…NIDV), 378–407 (QGLT…NLTI), 411–440 (DERT…KKNK), 473–502 (DQNT…SITQ), 506–535 (DEET…RLLL), 540–569 (MGNS…DKEA), 573–602 (YQKT…QIES), 605–634 (DTKT…TIDR), and 638–669 (EGKT…NLMI). A helical transmembrane segment spans residues 812–832 (PMYYFALFMYLVFIVSLTQYV). Over 833-870 (RHTKAPYNVWNEESYYDSEYFDENETCPQINTTKPDVV) the chain is Extracellular. 2 N-linked (GlcNAc...) asparagine glycosylation sites follow: asparagine 856 and asparagine 863. The helical transmembrane segment at 871-891 (WKIIIQTLAVCQILVECFQLF) threads the bilayer. Topologically, residues 892-894 (QRK) are cytoplasmic. The chain crosses the membrane as a helical span at residues 895–915 (FAYLVNWENWIDCFIYSTALI). The Extracellular portion of the chain corresponds to 916 to 932 (TVYDFSECSATSGVRQN). A helical membrane pass occupies residues 933–953 (WQWILAALCIFFGWINLLFMI). Residues 954-975 (RKMPRFGIFVVMFVDIVKTFFR) lie on the Cytoplasmic side of the membrane. The helical transmembrane segment at 976–996 (FFPVFVLFIIAFSSSFYVILQ) threads the bilayer. The Extracellular portion of the chain corresponds to 997–1004 (NRPEFSTI). Residues 1005-1025 (FMSPLKTTVMMIGEFEFTGIF) constitute an intramembrane region (pore-forming). Residues 1026–1048 (HGDETTHAEKMFGPAHTAVACAL) lie on the Extracellular side of the membrane. A helical membrane pass occupies residues 1049–1069 (FFFFCIIMTILLMNLLVGLAV). Topologically, residues 1070 to 1193 (DDIKGVQEKA…EKQVRLEAII (124 aa)) are cytoplasmic. The stretch at 1149–1191 (EMYEREAEFTSEMTQKLQNQAAKLKNIQENIDVMYEKQVRLEA) forms a coiled coil.

It belongs to the transient receptor (TC 1.A.4) family. In terms of assembly, homotetramer. As to expression, expressed in many sensory neurons, including OLQ and IL1 neurons.

The protein resides in the cell membrane. Functionally, receptor-activated non-selective cation channel involved in the nose-touch response and foraging behavior. Contributes to the neural responses of sensory neurons to touch, particularly after repeated mechanical stimulation. Has no apparent role in thermosensory or chemosensory behaviors. The chain is Transient receptor potential cation channel subfamily A member 1 homolog (trpa-1) from Caenorhabditis elegans.